The sequence spans 611 residues: TANK-binding kinase 1-binding protein 1 (611 aa).

A homodimerization region spans residues 1 to 280 (MESMFEDDIS…QDLASNQSEC (280 aa)). A coiled-coil region spans residues 48-162 (YGDIKERLGG…ALVETHLRQI (115 aa)). Position 184 is a phosphoserine (serine 184). Residues 218 to 277 (TSVSVSELERRRLEEALEAAQGEARGAQLREEQLQAECERLQGELKQLQETRAQDLASNQ) are a coiled coil. An interaction with TBK1 and IKBKE region spans residues 281 to 330 (DMAWVKRVGDDQVNLALAYTELTEELGRLRELSSLQGRILRTLLQEQARN). Positions 328–437 (ARNAGQRHSP…PPPPPGERTL (110 aa)) are disordered. Residues 346–361 (PACPSPSPPARPPPCA) are compositionally biased toward pro residues. Over residues 362–372 (PCQSPAAQRRS) the composition is skewed to low complexity. Serine 365, serine 372, serine 379, serine 385, serine 400, and serine 415 each carry phosphoserine. Over residues 389–406 (PSCPSPVPQRRSPVPPSC) the composition is skewed to pro residues. The span at 416 to 433 (PVPPSCPAPQPRPPPPPG) shows a compositional bias: pro residues. Serine 500 and serine 530 each carry phosphoserine. Residues 579-605 (IRSCPLCQLGFPVGYPDDALIKHIDSH) form a UBZ1-type zinc finger. The Zn(2+) site is built by cysteine 582, cysteine 585, histidine 601, and histidine 605.

Homodimer. May form a heterodimer with NAP1. Interacts with TKB1 and IKBKE. Weakly interacts with DDX3X.

In terms of biological role, adapter protein which constitutively binds TBK1 and IKBKE playing a role in antiviral innate immunity. Essential for the efficient induction of IRF-dependent transcription following infection with Sendai virus. In Mus musculus (Mouse), this protein is TANK-binding kinase 1-binding protein 1.